We begin with the raw amino-acid sequence, 380 residues long: Queuine tRNA-ribosyltransferase (380 aa).

The Proton acceptor role is filled by Asp-96. Substrate-binding positions include 96–100, Asp-150, Gln-193, and Gly-220; that span reads DSGGF. The interval 251–257 is RNA binding; it reads GVGAPDS. The active-site Nucleophile is the Asp-270. Residues 275–279 form an RNA binding; important for wobble base 34 recognition region; sequence TRIAR. The Zn(2+) site is built by Cys-308, Cys-310, Cys-313, and His-339.

Belongs to the queuine tRNA-ribosyltransferase family. As to quaternary structure, homodimer. Within each dimer, one monomer is responsible for RNA recognition and catalysis, while the other monomer binds to the replacement base PreQ1. The cofactor is Zn(2+).

The catalysed reaction is 7-aminomethyl-7-carbaguanine + guanosine(34) in tRNA = 7-aminomethyl-7-carbaguanosine(34) in tRNA + guanine. The protein operates within tRNA modification; tRNA-queuosine biosynthesis. Its function is as follows. Catalyzes the base-exchange of a guanine (G) residue with the queuine precursor 7-aminomethyl-7-deazaguanine (PreQ1) at position 34 (anticodon wobble position) in tRNAs with GU(N) anticodons (tRNA-Asp, -Asn, -His and -Tyr). Catalysis occurs through a double-displacement mechanism. The nucleophile active site attacks the C1' of nucleotide 34 to detach the guanine base from the RNA, forming a covalent enzyme-RNA intermediate. The proton acceptor active site deprotonates the incoming PreQ1, allowing a nucleophilic attack on the C1' of the ribose to form the product. After dissociation, two additional enzymatic reactions on the tRNA convert PreQ1 to queuine (Q), resulting in the hypermodified nucleoside queuosine (7-(((4,5-cis-dihydroxy-2-cyclopenten-1-yl)amino)methyl)-7-deazaguanosine). The sequence is that of Queuine tRNA-ribosyltransferase from Streptococcus pyogenes serotype M1.